The chain runs to 209 residues: Large ribosomal subunit protein uL3 (209 aa).

Over residues 112–122 (GTTRGHGTQGN) the composition is skewed to polar residues. The segment at 112–146 (GTTRGHGTQGNIKRWGQSRGPETHGSRYHRIPGSM) is disordered.

The protein belongs to the universal ribosomal protein uL3 family. Part of the 50S ribosomal subunit. Forms a cluster with proteins L14 and L19.

One of the primary rRNA binding proteins, it binds directly near the 3'-end of the 23S rRNA, where it nucleates assembly of the 50S subunit. The chain is Large ribosomal subunit protein uL3 from Lactobacillus johnsonii (strain CNCM I-12250 / La1 / NCC 533).